Consider the following 429-residue polypeptide: Histidine--tRNA ligase (429 aa).

It belongs to the class-II aminoacyl-tRNA synthetase family. Homodimer.

It is found in the cytoplasm. The enzyme catalyses tRNA(His) + L-histidine + ATP = L-histidyl-tRNA(His) + AMP + diphosphate + H(+). The polypeptide is Histidine--tRNA ligase (Prochlorococcus marinus (strain MIT 9515)).